A 211-amino-acid polypeptide reads, in one-letter code: Uracil phosphoribosyltransferase (211 aa).

5-phospho-alpha-D-ribose 1-diphosphate-binding positions include arginine 77, arginine 102, and 129-137 (DPMLATGGS). Uracil is bound by residues isoleucine 192 and 197-199 (GDA). Aspartate 198 contacts 5-phospho-alpha-D-ribose 1-diphosphate.

Belongs to the UPRTase family. The cofactor is Mg(2+).

It carries out the reaction UMP + diphosphate = 5-phospho-alpha-D-ribose 1-diphosphate + uracil. It participates in pyrimidine metabolism; UMP biosynthesis via salvage pathway; UMP from uracil: step 1/1. Its activity is regulated as follows. Allosterically activated by GTP. Catalyzes the conversion of uracil and 5-phospho-alpha-D-ribose 1-diphosphate (PRPP) to UMP and diphosphate. The sequence is that of Uracil phosphoribosyltransferase from Corynebacterium glutamicum (strain R).